The sequence spans 159 residues: uncharacterized protein (159 aa).

Transmembrane regions (helical) follow at residues 22-42 (LFSS…SFTI), 45-65 (PIEY…LLTL), 80-100 (IWVS…SLSL), and 104-124 (FPSL…CLAF).

The protein resides in the membrane. This is an uncharacterized protein from Schizosaccharomyces pombe (strain 972 / ATCC 24843) (Fission yeast).